The sequence spans 476 residues: Transcription factor EB (476 aa).

2 disordered regions span residues 1 to 66 (MASR…PPVP) and 107 to 142 (HISP…APNS). The interval 1–167 (MASRIGLRMQ…DDVIDNIMRL (167 aa)) is interaction with ACSS2. Positions 26–44 (QQQAVMHYMQQQQQQQQQQ) are enriched in low complexity. Serine 109, serine 114, serine 122, and serine 138 each carry phosphoserine. Over residues 132–142 (SSSAGNSAPNS) the composition is skewed to low complexity. The Nuclear export signal motif lies at 136 to 153 (GNSAPNSPMAMLHIGSNP). A Phosphoserine; by MTOR modification is found at serine 142. The tract at residues 156 to 165 (ELDDVIDNIM) is strong transcription activation domain. Threonine 183 is modified (phosphothreonine). Serine 211 carries the phosphoserine; by MTOR modification. Cysteine 212 carries the post-translational modification S-(2,3-dicarboxypropyl)cysteine. The 54-residue stretch at 235–288 (QKKDNHNLIERRRRFNINDRIKELGMLIPKANDLDVRWNKGTILKASVDYIRRM) folds into the bHLH domain. The Nuclear localization signal signature appears at 245–248 (RRRR). Positions 298–319 (LENHSRRLEMTNKQLWLRIQEL) are leucine-zipper. Residue serine 332 is modified to Phosphoserine. The tract at residues 349-430 (ELPSEEGPGE…HGSPFPSLSK (82 aa)) is disordered. The segment covering 369–390 (PEPLPALPPQAPLPLPTQPPSP) has biased composition (pro residues). Serine 423, serine 441, serine 466, serine 467, and serine 469 each carry phosphoserine. Over residues 447–469 (SDPLLSTMSPEASKASSRRSSFS) the composition is skewed to low complexity. The segment at 447 to 476 (SDPLLSTMSPEASKASSRRSSFSMEEGDVL) is disordered.

The protein belongs to the MiT/TFE family. Homodimer and heterodimer; with TFE3 or MITF. Interacts (when phosphorylated by MTOR) with YWHAZ; promoting retention in the cytosol. Interacts with IRGM; promoting association between TFEB and PPP3CB and dephosphorylation. Interacts with small GTPases Rag (RagA/RRAGA, RagB/RRAGB, RagC/RRAGC and/or RagD/RRAGD); promoting its recruitment to lysosomal membrane in the presence of nutrients. Interacts with ACSS2. In terms of processing, phosphorylation at Ser-211 by MTOR via non-canonical mTORC1 pathway regulates its subcellular location and activity. When nutrients are present, phosphorylation by MTOR promotes association with 14-3-3/YWHA adapters and retention in the cytosol. Inhibition of mTORC1, starvation and lysosomal disruption, promotes dephosphorylation by calcineurin PPP3CB and translocation to the nucleus. Dephosphorylated by calcineurin PPP3CB in response to lysosomal Ca(2+) release. IRGM promotes dephosphorylation by calcineurin PPP3CB, resulting in TFEB nuclear translocation and stimulation of lysosomal biogenesis. Dephosphorylated by phosphatase PPP3CA following Coxsackievirus B3 infection, leading to nuclear translocation. Exported from the nucleus in a mTORC1-dependent manner in response to nutrient availability. Alkylated via a non-enzymatic covalent modification. Itaconate, an anti-inflammatory metabolite generated in response to lipopolysaccharide, alkylates Cys-212, preventing association with 14-3-3/YWHA adapters, thereby promoting nuclear translocation and activity. Post-translationally, sumoylated; does not affect dimerization with MITF. In terms of processing, (Microbial infection) Cleavage by Coxsackievirus B3 protease 3C after site Gln-60. This non-phosphorylated cleavage product retains its ability to interact with TFEB, TFE3 or MITF and presents impaired transcriptional activity, resulting in disruption of lysosomal functions and increased viral infection.

The protein resides in the nucleus. The protein localises to the cytoplasm. Its subcellular location is the cytosol. It localises to the lysosome membrane. Its activity is regulated as follows. Inhibited by eltrombopag drug, which binds to the bHLH domain and disrupts DNA-binding. Transcription factor that acts as a master regulator of lysosomal biogenesis, autophagy, lysosomal exocytosis, lipid catabolism, energy metabolism and immune response. Specifically recognizes and binds E-box sequences (5'-CANNTG-3'); efficient DNA-binding requires dimerization with itself or with another MiT/TFE family member such as TFE3 or MITF. Involved in the cellular response to amino acid availability by acting downstream of MTOR: in the presence of nutrients, TFEB phosphorylation by MTOR promotes its cytosolic retention and subsequent inactivation. Upon starvation or lysosomal stress, inhibition of MTOR induces TFEB dephosphorylation, resulting in nuclear localization and transcription factor activity. Specifically recognizes and binds the CLEAR-box sequence (5'-GTCACGTGAC-3') present in the regulatory region of many lysosomal genes, leading to activate their expression, thereby playing a central role in expression of lysosomal genes. Regulates lysosomal positioning in response to nutrient deprivation by promoting the expression of PIP4P1. Acts as a positive regulator of autophagy by promoting expression of genes involved in autophagy. In association with TFE3, activates the expression of CD40L in T-cells, thereby playing a role in T-cell-dependent antibody responses in activated CD4(+) T-cells and thymus-dependent humoral immunity. Specifically recognizes the gamma-E3 box, a subset of E-boxes, present in the heavy-chain immunoglobulin enhancer. Plays a role in the signal transduction processes required for normal vascularization of the placenta. Involved in the immune response to infection by the bacteria S.aureus, S.typhimurium or S.enterica: infection promotes itaconate production, leading to alkylation, resulting in nuclear localization and transcription factor activity. Itaconate-mediated alkylation activates TFEB-dependent lysosomal biogenesis, facilitating the bacteria clearance during the antibacterial innate immune response. In association with ACSS2, promotes the expression of genes involved in lysosome biogenesis and both autophagy upon glucose deprivation. The sequence is that of Transcription factor EB from Homo sapiens (Human).